A 225-amino-acid chain; its full sequence is UPF0128 protein PH1314 (225 aa).

Belongs to the UPF0128 family.

The sequence is that of UPF0128 protein PH1314 from Pyrococcus horikoshii (strain ATCC 700860 / DSM 12428 / JCM 9974 / NBRC 100139 / OT-3).